The chain runs to 128 residues: Fumarate reductase subunit C (128 aa).

The next 3 membrane-spanning stretches (helical) occupy residues 31–51 (ATCI…ISLG), 67–87 (VVIL…TLYV), and 106–126 (ILKN…LVLV).

This sequence belongs to the FrdC family. In terms of assembly, part of an enzyme complex containing four subunits: a flavoprotein (FrdA), an iron-sulfur protein (FrdB), and two hydrophobic anchor proteins (FrdC and FrdD).

Its subcellular location is the cell inner membrane. Anchors the catalytic components of the fumarate reductase complex to the cell membrane, binds quinones. This chain is Fumarate reductase subunit C, found in Haemophilus ducreyi (strain 35000HP / ATCC 700724).